We begin with the raw amino-acid sequence, 604 residues long: MHLLCFFFLLLWTGPARSYFPEERWSPESALLAPRVLVALVCRNSAHSLPHVLGAIDRLNYPKDRMAVWVATDHNSDNTTEILREWLVNVQNFYHYVEWRPQDEPSVYEGESGPKHWTNLRYEHVMKLRQAALETAREMWADYFMLVDCDNLLTNRDVLWKLMRENKTIVAPMLESRAAYSNFWCGMTSQGYYKRTPAYMPIRRQERKGCFAVPMVHSTLLLDLRKEASRQLAFFPPHPDYTWAFDDIIIFAFSARMAEVQMYICNRETYGYFPVPLRSQNSLQDEAESFLHSQLEVMVRNPPIEPSVYLSLMPKQTDKMGFDEVFMINLLRRSDRRERMLRTLYEQEIACKIITAVDGKALNASQVEALGIKMLPGYSDPYHGRPLTKGELGCFLSHYNIWNEIVDRGLQSSLVIEDDLRFEVFFKRRLQNLMQEVQSQQLDWDLIYIGRKRMQVERPEKSVPRIHSLVEADYSYWTLGYVISLRGAQKLLRAEPLKKMLPVDEFLPVMYNKHPIEEYMSHFPQRDLRAFSAEPLLIYPTHYTGDQGYISDTETSSVWDNESVLTDWDRARSRKSREQEELSSEAQNTDVLQSPLDSTARDEL.

A signal peptide spans 1 to 18 (MHLLCFFFLLLWTGPARS). 4 N-linked (GlcNAc...) asparagine glycosylation sites follow: N78, N166, N363, and N561. Residues 570–580 (RARSRKSREQE) are compositionally biased toward basic and acidic residues. The tract at residues 570–604 (RARSRKSREQEELSSEAQNTDVLQSPLDSTARDEL) is disordered. Positions 584-597 (SEAQNTDVLQSPLD) are enriched in polar residues. The Prevents secretion from ER motif lies at 601–604 (RDEL).

This sequence belongs to the glycosyltransferase 25 family.

Its subcellular location is the endoplasmic reticulum lumen. It catalyses the reaction (5R)-5-hydroxy-L-lysyl-[collagen] + UDP-alpha-D-galactose = (5R)-5-O-(beta-D-galactosyl)-5-hydroxy-L-lysyl-[collagen] + UDP + H(+). Its function is as follows. Beta-galactosyltransferase that transfers beta-galactose to hydroxylysine residues of type I collagen. By acting on collagen glycosylation, facilitates the formation of collagen triple helix. This chain is Procollagen galactosyltransferase 1 (colgalt1), found in Danio rerio (Zebrafish).